A 150-amino-acid chain; its full sequence is Large ribosomal subunit protein eL19 (150 aa).

Residues 56 to 90 (RGISSGRLKERKHKRRSKGEGRKHGSRKGKSGART) form a disordered region.

This sequence belongs to the eukaryotic ribosomal protein eL19 family. As to quaternary structure, part of the 50S ribosomal subunit.

Its function is as follows. Binds to the 23S rRNA. The chain is Large ribosomal subunit protein eL19 from Sulfolobus acidocaldarius (strain ATCC 33909 / DSM 639 / JCM 8929 / NBRC 15157 / NCIMB 11770).